The following is a 158-amino-acid chain: Methylated-DNA--protein-cysteine methyltransferase (158 aa).

Catalysis depends on Cys-126, which acts as the Nucleophile; methyl group acceptor.

This sequence belongs to the MGMT family.

Its subcellular location is the cytoplasm. The enzyme catalyses a 6-O-methyl-2'-deoxyguanosine in DNA + L-cysteinyl-[protein] = S-methyl-L-cysteinyl-[protein] + a 2'-deoxyguanosine in DNA. The catalysed reaction is a 4-O-methyl-thymidine in DNA + L-cysteinyl-[protein] = a thymidine in DNA + S-methyl-L-cysteinyl-[protein]. In terms of biological role, involved in the cellular defense against the biological effects of O6-methylguanine (O6-MeG) and O4-methylthymine (O4-MeT) in DNA. Repairs the methylated nucleobase in DNA by stoichiometrically transferring the methyl group to a cysteine residue in the enzyme. This is a suicide reaction: the enzyme is irreversibly inactivated. In Methanosarcina mazei (strain ATCC BAA-159 / DSM 3647 / Goe1 / Go1 / JCM 11833 / OCM 88) (Methanosarcina frisia), this protein is Methylated-DNA--protein-cysteine methyltransferase.